The sequence spans 93 residues: MPRSLKKGVFVDDHLLEKVLELNAKGEKRLIKTWSRRSTIVPEMVGHTIAVYNGKQHVPVYITENMVGHKLGEFAPTRTYRGHGKEAKATKKK.

It belongs to the universal ribosomal protein uS19 family.

In terms of biological role, protein S19 forms a complex with S13 that binds strongly to the 16S ribosomal RNA. The protein is Small ribosomal subunit protein uS19 (rpsS) of Thermus thermophilus (strain ATCC BAA-163 / DSM 7039 / HB27).